The following is a 721-amino-acid chain: DNA ligase (721 aa).

NAD(+)-binding positions include 42-46 (DAEYD), 91-92 (SL), and Glu-125. The active-site N6-AMP-lysine intermediate is Lys-127. The NAD(+) site is built by Arg-148, Glu-184, Lys-300, and Lys-324. Residues Cys-430, Cys-433, Cys-448, and Cys-454 each contribute to the Zn(2+) site. The region spanning 642–721 (STGSPVEGKT…DAWFTLVGEE (80 aa)) is the BRCT domain.

This sequence belongs to the NAD-dependent DNA ligase family. LigA subfamily. Requires Mg(2+) as cofactor. Mn(2+) serves as cofactor.

The catalysed reaction is NAD(+) + (deoxyribonucleotide)n-3'-hydroxyl + 5'-phospho-(deoxyribonucleotide)m = (deoxyribonucleotide)n+m + AMP + beta-nicotinamide D-nucleotide.. In terms of biological role, DNA ligase that catalyzes the formation of phosphodiester linkages between 5'-phosphoryl and 3'-hydroxyl groups in double-stranded DNA using NAD as a coenzyme and as the energy source for the reaction. It is essential for DNA replication and repair of damaged DNA. In Brucella anthropi (strain ATCC 49188 / DSM 6882 / CCUG 24695 / JCM 21032 / LMG 3331 / NBRC 15819 / NCTC 12168 / Alc 37) (Ochrobactrum anthropi), this protein is DNA ligase.